The sequence spans 903 residues: DNA mismatch repair protein MutS (903 aa).

Positions 1 to 89 are disordered; that stretch reads MPRSASQPPD…DEPAWGHHSQ (89 aa). Composition is skewed to low complexity over residues 20–36 and 49–62; these read APEP…SEPE and ADAA…QATA. Residue 719–726 participates in ATP binding; the sequence is GPNASGKS.

The protein belongs to the DNA mismatch repair MutS family.

In terms of biological role, this protein is involved in the repair of mismatches in DNA. It is possible that it carries out the mismatch recognition step. This protein has a weak ATPase activity. This chain is DNA mismatch repair protein MutS, found in Synechococcus sp. (strain CC9605).